Here is a 158-residue protein sequence, read N- to C-terminus: Cyclic pyranopterin monophosphate synthase (158 aa).

Substrate-binding positions include 76 to 78 (LCH) and 114 to 115 (ME). D129 is an active-site residue.

Belongs to the MoaC family. In terms of assembly, homohexamer; trimer of dimers.

It catalyses the reaction (8S)-3',8-cyclo-7,8-dihydroguanosine 5'-triphosphate = cyclic pyranopterin phosphate + diphosphate. It functions in the pathway cofactor biosynthesis; molybdopterin biosynthesis. Functionally, catalyzes the conversion of (8S)-3',8-cyclo-7,8-dihydroguanosine 5'-triphosphate to cyclic pyranopterin monophosphate (cPMP). In Brucella anthropi (strain ATCC 49188 / DSM 6882 / CCUG 24695 / JCM 21032 / LMG 3331 / NBRC 15819 / NCTC 12168 / Alc 37) (Ochrobactrum anthropi), this protein is Cyclic pyranopterin monophosphate synthase.